A 128-amino-acid chain; its full sequence is Modulator protein MzrA (128 aa).

The Cytoplasmic segment spans residues 1–11; the sequence is MMVMKRPSLRQ. A helical membrane pass occupies residues 12 to 32; sequence FSWLLGGSLLLGALFWLWLAV. Over 33 to 128 the chain is Periplasmic; the sequence is QQQEATLAIR…RLRDAPHRLG (96 aa).

The protein belongs to the MzrA family. Interacts with EnvZ.

The protein localises to the cell inner membrane. In terms of biological role, modulates the activity of the EnvZ/OmpR two-component regulatory system, probably by directly modulating EnvZ enzymatic activity and increasing stability of phosphorylated OmpR. This chain is Modulator protein MzrA, found in Klebsiella pneumoniae subsp. pneumoniae (strain ATCC 700721 / MGH 78578).